A 526-amino-acid chain; its full sequence is Protein mono-ADP-ribosyltransferase PARP3 (526 aa).

Positions 1-55 (MAPKRRAPPASQPADGGKKAKGGQEEEEDAWSSALNALKTAPREKPPATIDGQCP) are disordered. One can recognise a WGR domain in the interval 61-151 (DAKVYEDYDC…DNFVAQPGKY (91 aa)). Positions 183 to 301 (PCALDETTQK…DIEVAQSLQA (119 aa)) constitute a PARP alpha-helical domain. The PARP catalytic domain maps to 312-526 (HPLDRDYALL…RIRYLVQLHF (215 aa)).

Belongs to the ARTD/PARP family.

It is found in the nucleus. The protein resides in the chromosome. The protein localises to the cytoplasm. Its subcellular location is the cytoskeleton. It localises to the microtubule organizing center. It is found in the centrosome. The protein resides in the centriole. It catalyses the reaction L-aspartyl-[protein] + NAD(+) = 4-O-(ADP-D-ribosyl)-L-aspartyl-[protein] + nicotinamide. The catalysed reaction is L-glutamyl-[protein] + NAD(+) = 5-O-(ADP-D-ribosyl)-L-glutamyl-[protein] + nicotinamide. The enzyme catalyses L-lysyl-[protein] + NAD(+) = N(6)-(ADP-D-ribosyl)-L-lysyl-[protein] + nicotinamide + H(+). Mono-ADP-ribosyltransferase that mediates mono-ADP-ribosylation of target proteins and plays a key role in the response to DNA damage. Mediates mono-ADP-ribosylation of glutamate, aspartate or lysine residues on target proteins. In contrast to PARP1 and PARP2, it is not able to mediate poly-ADP-ribosylation. Involved in DNA repair by mediating mono-ADP-ribosylation of a limited number of acceptor proteins involved in chromatin architecture and in DNA metabolism, such as histone H2B, XRCC5 and XRCC6. ADP-ribosylation follows DNA damage and appears as an obligatory step in a detection/signaling pathway leading to the reparation of DNA strand breaks. Involved in single-strand break repair by catalyzing mono-ADP-ribosylation of histone H2B on 'Glu-2' (H2BE2ADPr) of nucleosomes containing nicked DNA. Cooperates with the XRCC5-XRCC6 (Ku80-Ku70) heterodimer to limit end-resection thereby promoting accurate NHEJ. Associates with a number of DNA repair factors and is involved in the response to exogenous and endogenous DNA strand breaks. Together with APLF, promotes the retention of the LIG4-XRCC4 complex on chromatin and accelerate DNA ligation during non-homologous end-joining (NHEJ). In addition to proteins, also able to ADP-ribosylate DNA: mediates DNA mono-ADP-ribosylation of DNA strand break termini via covalent addition of a single ADP-ribose moiety to a 5'- or 3'-terminal phosphate residues in DNA containing multiple strand breaks. The sequence is that of Protein mono-ADP-ribosyltransferase PARP3 from Gallus gallus (Chicken).